A 281-amino-acid polypeptide reads, in one-letter code: N-acetylmuramic acid 6-phosphate etherase (281 aa).

One can recognise an SIS domain in the interval 63 to 226 (IVPRMKQGGR…TTSVMIQLGR (164 aa)). Glutamate 91 functions as the Proton donor in the catalytic mechanism. Glutamate 122 is a catalytic residue.

It belongs to the GCKR-like family. MurNAc-6-P etherase subfamily. Homodimer.

The enzyme catalyses N-acetyl-D-muramate 6-phosphate + H2O = N-acetyl-D-glucosamine 6-phosphate + (R)-lactate. It functions in the pathway amino-sugar metabolism; N-acetylmuramate degradation. Its function is as follows. Specifically catalyzes the cleavage of the D-lactyl ether substituent of MurNAc 6-phosphate, producing GlcNAc 6-phosphate and D-lactate. The chain is N-acetylmuramic acid 6-phosphate etherase from Bacteroides fragilis (strain ATCC 25285 / DSM 2151 / CCUG 4856 / JCM 11019 / LMG 10263 / NCTC 9343 / Onslow / VPI 2553 / EN-2).